Consider the following 86-residue polypeptide: Large ribosomal subunit protein uL23 (86 aa).

The protein belongs to the universal ribosomal protein uL23 family. In terms of assembly, part of the 50S ribosomal subunit. Contacts protein L29.

Binds to 23S rRNA. One of the proteins that surrounds the polypeptide exit tunnel on the outside of the ribosome. The sequence is that of Large ribosomal subunit protein uL23 from Methanococcus maripaludis (strain C6 / ATCC BAA-1332).